Consider the following 94-residue polypeptide: Neurotoxin LmNaTx45.2 (94 aa).

The N-terminal stretch at 1–18 (MKLAILSLFLVFQIGVES) is a signal peptide. The LCN-type CS-alpha/beta domain occupies 20 to 86 (KNGFALDHYG…IGDSRKNYCD (67 aa)). Cystine bridges form between Cys34–Cys85, Cys44–Cys63, Cys48–Cys65, and Cys59–Cys85.

Belongs to the long (4 C-C) scorpion toxin superfamily. Sodium channel inhibitor family. Beta subfamily. As to expression, expressed by the venom gland.

It localises to the secreted. In terms of biological role, binds voltage-independently at site-4 of sodium channels (Nav) and shift the voltage of activation toward more negative potentials thereby affecting sodium channel activation and promoting spontaneous and repetitive firing. The polypeptide is Neurotoxin LmNaTx45.2 (Lychas mucronatus (Chinese swimming scorpion)).